We begin with the raw amino-acid sequence, 352 residues long: N-terminal EF-hand calcium-binding protein 1 (352 aa).

Ser4 is modified (phosphoserine). EF-hand domains are found at residues Lys26–Ser61 and Leu60–Glu95. Ca(2+)-binding residues include Asp39, Asn41, Asp43, Lys45, and Glu50. Residues Leu135–Gln163 adopt a coiled-coil conformation. The interval Glu155–Val202 is disordered. Residues His190–Val202 show a composition bias toward polar residues. Phosphoserine is present on residues Ser192 and Ser197. Residues Glu209–Tyr275 are a coiled coil. The ABM domain maps to Met252–Met340.

Interacts with STX1. May interact with CPNE6.

The protein resides in the cytoplasm. The polypeptide is N-terminal EF-hand calcium-binding protein 1 (Necab1) (Rattus norvegicus (Rat)).